The chain runs to 42 residues: Hemoglobin subunit beta-A (42 aa).

In terms of domain architecture, Globin spans 2–42; it reads EWTDAERSAILSLWGKIDTDELGPALLARLXLVXXXTQRYF.

It belongs to the globin family. Heterotetramer of two alpha chains and two beta chains. Red blood cells.

Functionally, involved in oxygen transport from gills to the various peripheral tissues. The chain is Hemoglobin subunit beta-A from Catostomus clarkii (Desert sucker).